An 862-amino-acid polypeptide reads, in one-letter code: Protein SEY1 (862 aa).

The Cytoplasmic segment spans residues 1-747 (MVSNGHFASA…KRSAIGGMTQ (747 aa)). One can recognise a GB1/RHD3-type G domain in the interval 49-306 (GFNYHLISVF…IPADGFAVYA (258 aa)). 59–66 (GSQSTGKS) is a GTP binding site. Residues 481–507 (SNYTQELALYQKDLEKISAQLRKDEMR) are a coiled coil. The chain crosses the membrane as a helical span at residues 748–768 (IPVYFYILLLALGWNEIVAVL). Topologically, residues 769 to 771 (RNP) are lumenal. Residues 772 to 792 (LYFFMLFLCAVGAFVTYQLNL) traverse the membrane as a helical segment. At 793 to 862 (WGPMIKMAEA…DDDDEDEGSW (70 aa)) the chain is on the cytoplasmic side. A disordered region spans residues 819–862 (LEPSEAGPHAARYKNSTEEYEMSNVKAPQRTNSGDDDDEDEGSW). A compositionally biased stretch (acidic residues) spans 852–862 (GDDDDEDEGSW).

This sequence belongs to the TRAFAC class dynamin-like GTPase superfamily. GB1/RHD3 GTPase family. RHD3 subfamily.

The protein resides in the endoplasmic reticulum membrane. Cooperates with the reticulon proteins and tubule-shaping DP1 family proteins to generate and maintain the structure of the tubular endoplasmic reticulum network. Has GTPase activity, which is required for its function in ER organization. The sequence is that of Protein SEY1 from Uncinocarpus reesii (strain UAMH 1704).